We begin with the raw amino-acid sequence, 445 residues long: DNA primase DnaG (445 aa).

One can recognise a Toprim domain in the interval 166–252; that stretch reads DAIVVVEGRS…SVEDLSRSEV (87 aa). E172, D214, and D216 together coordinate Mg(2+). Residues 276-355 form a disordered region; it reads EEMSQAGEST…NGDGPTIPSL (80 aa). Over residues 284–298 the composition is skewed to low complexity; it reads STTADGGAVAAATSD. A compositionally biased stretch (polar residues) spans 303–313; the sequence is NQPSPSSQTGS. A compositionally biased stretch (low complexity) spans 324–337; it reads SVVDNSNATAVADA.

This sequence belongs to the archaeal DnaG primase family. In terms of assembly, forms a ternary complex with MCM helicase and DNA. Requires Mg(2+) as cofactor.

The catalysed reaction is ssDNA + n NTP = ssDNA/pppN(pN)n-1 hybrid + (n-1) diphosphate.. Functionally, RNA polymerase that catalyzes the synthesis of short RNA molecules used as primers for DNA polymerase during DNA replication. This Haloarcula marismortui (strain ATCC 43049 / DSM 3752 / JCM 8966 / VKM B-1809) (Halobacterium marismortui) protein is DNA primase DnaG.